Consider the following 95-residue polypeptide: YcgL domain-containing protein APJL_0712 (95 aa).

The 85-residue stretch at 4–88 (HLCAIYKSPK…PPENLLKTFL (85 aa)) folds into the YcgL domain.

This Actinobacillus pleuropneumoniae serotype 3 (strain JL03) protein is YcgL domain-containing protein APJL_0712.